The following is an 83-amino-acid chain: Acylphosphatase (83 aa).

Residues 1–83 (MIEGRVQRVG…TGDDWFEVRY (83 aa)) form the Acylphosphatase-like domain. Catalysis depends on residues Arg-12 and Asn-30.

It belongs to the acylphosphatase family.

It catalyses the reaction an acyl phosphate + H2O = a carboxylate + phosphate + H(+). This Synechococcus sp. (strain CC9605) protein is Acylphosphatase (acyP).